Reading from the N-terminus, the 132-residue chain is MSTHDPISDLITRIRNAQMRSKPKVSTPGSKMRANVLEVLKSEGYIRGYASVEHSSGRSELEIELKYFDGEPVIREIERVSRPGRRVYASVKNLPRVNNGLGISVLSTPKGIMADHEARDANVGGEVLFTVF.

It belongs to the universal ribosomal protein uS8 family. Part of the 30S ribosomal subunit. Contacts proteins S5 and S12.

One of the primary rRNA binding proteins, it binds directly to 16S rRNA central domain where it helps coordinate assembly of the platform of the 30S subunit. The sequence is that of Small ribosomal subunit protein uS8 from Nitrobacter winogradskyi (strain ATCC 25391 / DSM 10237 / CIP 104748 / NCIMB 11846 / Nb-255).